The chain runs to 398 residues: Succinate--CoA ligase [ADP-forming] subunit beta (398 aa).

The ATP-grasp domain occupies methionine 9 to glutamate 253. Residues lysine 46, glycine 53 to glycine 55, valine 111, and glutamate 116 contribute to the ATP site. Residues asparagine 208 and aspartate 222 each contribute to the Mg(2+) site. Substrate-binding positions include asparagine 273 and glycine 330–methionine 332.

This sequence belongs to the succinate/malate CoA ligase beta subunit family. In terms of assembly, heterotetramer of two alpha and two beta subunits. It depends on Mg(2+) as a cofactor.

The enzyme catalyses succinate + ATP + CoA = succinyl-CoA + ADP + phosphate. It carries out the reaction GTP + succinate + CoA = succinyl-CoA + GDP + phosphate. Its pathway is carbohydrate metabolism; tricarboxylic acid cycle; succinate from succinyl-CoA (ligase route): step 1/1. Its function is as follows. Succinyl-CoA synthetase functions in the citric acid cycle (TCA), coupling the hydrolysis of succinyl-CoA to the synthesis of either ATP or GTP and thus represents the only step of substrate-level phosphorylation in the TCA. The beta subunit provides nucleotide specificity of the enzyme and binds the substrate succinate, while the binding sites for coenzyme A and phosphate are found in the alpha subunit. This Zymomonas mobilis subsp. mobilis (strain ATCC 31821 / ZM4 / CP4) protein is Succinate--CoA ligase [ADP-forming] subunit beta.